Reading from the N-terminus, the 916-residue chain is MSEALSVPAAEGENTVTASESPDLAATSARAEKVGKQEKPEKAEKQSPMMLQYHRIKADHPDTLLFYRMGDFYELFHDDAEKAARLLDITLTARGQSGGVPIRMAGIPFHSADQYLARLVKLGESVAICEQIGDPATSKGPVERKVVRIVTPGTLTDAALLPDKSDTFLLAVHQQTTRRGVSKTGLAWLNLASGELRLMECDAAQLSRELERIRPAEVLYTDGMDLPTLTCARTRLPEWHFDQEAGTRRLREQIGVASLEPFGCSGLGAALGAAGALLNYAATTQGQSLRHVQGVTVERESEFVGLDSATRRNLELTETLRGTESPTLFSLLDTCATTMGSRALRHWLHHPLRDPALPRARQQAIGALITQGPDGLRAVLRKLADVERITARLALLSARPRDLSSLRDTLRALPDVQAATVSSEDAPLLAQTLEEIDIPQDCLELLIRAVADEPSTVIRDGGVIARGYDSELDELRDISENCGQFLIDLETRERERTGITNLRVEYNRVHGFYIEVTNGQADKVPDDYRRRQTLKNAERYITPELKAFEDKALSAQDRALAREKQLYDGLLQALLPHIGSLRRVAGALARLDVLATLAERAKTLDWVQPERVQENVIDISQGRHPVVEGQLAAESVAFIANDCQLNEARKLLLITGPNMGGKSTFMRQTALIVLLACVGAWVPARRAVIGPVDRIFTRIGAADDLAGGRSTFMVEMTEAAAILHNATPSSLVLMDEIGRGTSTFDGLALAWAIARHLLSHNRSHTLFATHYFELTQLPVEFPQAANVHLSAVEHGDGIVFLHAVQDGPASQSYGLQVAQLAGVPQPVIRAARKHLAWLEEQSADATPTPQMDLFSAQSSPSADDEDDKSAGQSAVPPAQAATLEALADIDPDSLSPREALEALYRLKSISETARTV.

A disordered region spans residues 1–47 (MSEALSVPAAEGENTVTASESPDLAATSARAEKVGKQEKPEKAEKQS). Basic and acidic residues predominate over residues 30-45 (RAEKVGKQEKPEKAEK). 656–663 (GPNMGGKS) serves as a coordination point for ATP. Polar residues predominate over residues 843–861 (ADATPTPQMDLFSAQSSPS). The interval 843–880 (ADATPTPQMDLFSAQSSPSADDEDDKSAGQSAVPPAQA) is disordered.

This sequence belongs to the DNA mismatch repair MutS family.

In terms of biological role, this protein is involved in the repair of mismatches in DNA. It is possible that it carries out the mismatch recognition step. This protein has a weak ATPase activity. This Cupriavidus metallidurans (strain ATCC 43123 / DSM 2839 / NBRC 102507 / CH34) (Ralstonia metallidurans) protein is DNA mismatch repair protein MutS.